The chain runs to 213 residues: Urease accessory protein UreG (213 aa).

12–19 (GPVGSGKT) lines the GTP pocket.

The protein belongs to the SIMIBI class G3E GTPase family. UreG subfamily. In terms of assembly, homodimer. UreD, UreF and UreG form a complex that acts as a GTP-hydrolysis-dependent molecular chaperone, activating the urease apoprotein by helping to assemble the nickel containing metallocenter of UreC. The UreE protein probably delivers the nickel.

It is found in the cytoplasm. Facilitates the functional incorporation of the urease nickel metallocenter. This process requires GTP hydrolysis, probably effectuated by UreG. This is Urease accessory protein UreG from Marinomonas sp. (strain MWYL1).